The sequence spans 189 residues: MSLKDRFDKFIEYFTEDGDDVQVAESRVQQQAVKPSNSRPAQQEPVRDIKQPRLVSSSSQHVTNTPSSNENITRLHARQQELAQNHSVATSEKVTIDVRYPKKYEDAPAIVDLLLANESVLIDFQYMTEVQARRCIDYLDGAKQVLMGNLRRVSGTMYLLTPVNVVVNIEDIKLPDGVHSEFDFDMKRR.

Residues 25 to 70 (ESRVQQQAVKPSNSRPAQQEPVRDIKQPRLVSSSSQHVTNTPSSNE) form a disordered region. Polar residues-rich tracts occupy residues 27–41 (RVQQQAVKPSNSRPA) and 54–70 (LVSSSSQHVTNTPSSNE).

It belongs to the SepF family. In terms of assembly, homodimer. Interacts with FtsZ.

The protein localises to the cytoplasm. Cell division protein that is part of the divisome complex and is recruited early to the Z-ring. Probably stimulates Z-ring formation, perhaps through the cross-linking of FtsZ protofilaments. Its function overlaps with FtsA. This Streptococcus gordonii (strain Challis / ATCC 35105 / BCRC 15272 / CH1 / DL1 / V288) protein is Cell division protein SepF.